The sequence spans 217 residues: Probable transaldolase (217 aa).

Lys-83 functions as the Schiff-base intermediate with substrate in the catalytic mechanism.

The protein belongs to the transaldolase family. Type 3B subfamily.

It localises to the cytoplasm. It catalyses the reaction D-sedoheptulose 7-phosphate + D-glyceraldehyde 3-phosphate = D-erythrose 4-phosphate + beta-D-fructose 6-phosphate. It functions in the pathway carbohydrate degradation; pentose phosphate pathway; D-glyceraldehyde 3-phosphate and beta-D-fructose 6-phosphate from D-ribose 5-phosphate and D-xylulose 5-phosphate (non-oxidative stage): step 2/3. Transaldolase is important for the balance of metabolites in the pentose-phosphate pathway. In Bartonella quintana (strain Toulouse) (Rochalimaea quintana), this protein is Probable transaldolase.